Reading from the N-terminus, the 83-residue chain is Cell division topological specificity factor (83 aa).

Belongs to the MinE family.

Functionally, prevents the cell division inhibition by proteins MinC and MinD at internal division sites while permitting inhibition at polar sites. This ensures cell division at the proper site by restricting the formation of a division septum at the midpoint of the long axis of the cell. This Acidithiobacillus ferrooxidans (strain ATCC 23270 / DSM 14882 / CIP 104768 / NCIMB 8455) (Ferrobacillus ferrooxidans (strain ATCC 23270)) protein is Cell division topological specificity factor.